Reading from the N-terminus, the 537-residue chain is CTP synthase (537 aa).

The amidoligase domain stretch occupies residues 1-268; that stretch reads MPAKFIFVTG…DSIVVERLKL (268 aa). Ser14 provides a ligand contact to CTP. A UTP-binding site is contributed by Ser14. 15–20 lines the ATP pocket; it reads SLGKGI. Tyr55 lines the L-glutamine pocket. Residue Asp72 participates in ATP binding. Positions 72 and 142 each coordinate Mg(2+). CTP-binding positions include 149–151, 189–194, and Lys225; these read DIE and KTKPTQ. UTP contacts are provided by residues 189-194 and Lys225; that span reads KTKPTQ. Positions 293 to 534 constitute a Glutamine amidotransferase type-1 domain; the sequence is EIALVGKYVT…IGAACRRAGG (242 aa). Gly354 contacts L-glutamine. Residue Cys381 is the Nucleophile; for glutamine hydrolysis of the active site. Residues 382-385, Glu405, and Arg462 each bind L-glutamine; that span reads LGMQ. Catalysis depends on residues His507 and Glu509.

This sequence belongs to the CTP synthase family. Homotetramer.

The enzyme catalyses UTP + L-glutamine + ATP + H2O = CTP + L-glutamate + ADP + phosphate + 2 H(+). It catalyses the reaction L-glutamine + H2O = L-glutamate + NH4(+). It carries out the reaction UTP + NH4(+) + ATP = CTP + ADP + phosphate + 2 H(+). The protein operates within pyrimidine metabolism; CTP biosynthesis via de novo pathway; CTP from UDP: step 2/2. With respect to regulation, allosterically activated by GTP, when glutamine is the substrate; GTP has no effect on the reaction when ammonia is the substrate. The allosteric effector GTP functions by stabilizing the protein conformation that binds the tetrahedral intermediate(s) formed during glutamine hydrolysis. Inhibited by the product CTP, via allosteric rather than competitive inhibition. Catalyzes the ATP-dependent amination of UTP to CTP with either L-glutamine or ammonia as the source of nitrogen. Regulates intracellular CTP levels through interactions with the four ribonucleotide triphosphates. The chain is CTP synthase from Moorella thermoacetica (strain ATCC 39073 / JCM 9320).